The primary structure comprises 342 residues: Biotin synthase (342 aa).

The Radical SAM core domain maps to asparagine 55–lysine 274. Residues cysteine 70, cysteine 74, and cysteine 77 each coordinate [4Fe-4S] cluster. 4 residues coordinate [2Fe-2S] cluster: cysteine 114, cysteine 145, cysteine 205, and arginine 278.

Belongs to the radical SAM superfamily. Biotin synthase family. Homodimer. [4Fe-4S] cluster serves as cofactor. Requires [2Fe-2S] cluster as cofactor.

It catalyses the reaction (4R,5S)-dethiobiotin + (sulfur carrier)-SH + 2 reduced [2Fe-2S]-[ferredoxin] + 2 S-adenosyl-L-methionine = (sulfur carrier)-H + biotin + 2 5'-deoxyadenosine + 2 L-methionine + 2 oxidized [2Fe-2S]-[ferredoxin]. Its pathway is cofactor biosynthesis; biotin biosynthesis; biotin from 7,8-diaminononanoate: step 2/2. Catalyzes the conversion of dethiobiotin (DTB) to biotin by the insertion of a sulfur atom into dethiobiotin via a radical-based mechanism. In Rhodopseudomonas palustris (strain BisB5), this protein is Biotin synthase.